The sequence spans 137 residues: Large ribosomal subunit protein uL22c (137 aa).

The protein belongs to the universal ribosomal protein uL22 family. In terms of assembly, part of the 50S ribosomal subunit.

Its subcellular location is the plastid. The protein localises to the chloroplast. In terms of biological role, this protein binds specifically to 23S rRNA. Its function is as follows. The globular domain of the protein is located near the polypeptide exit tunnel on the outside of the subunit, while an extended beta-hairpin is found that lines the wall of the exit tunnel in the center of the 70S ribosome. This is Large ribosomal subunit protein uL22c (rpl22) from Oenothera argillicola (Appalachian evening primrose).